Consider the following 235-residue polypeptide: Protein RESISTANCE TO PHYTOPHTHORA 1, chloroplastic (235 aa).

The N-terminal 43 residues, 1–43 (MNSATTMSASVLNYQILKFFPPQKNGFLKSPLIRGKICRFCVS), are a transit peptide targeting the chloroplast. Basic and acidic residues predominate over residues 53-66 (VIEDPKEETQEKSD). The interval 53 to 92 (VIEDPKEETQEKSDGVIVNSTEEEEERSGENSTSTGPSTV) is disordered. Transmembrane regions (helical) follow at residues 131–151 (FEVQ…NLIF), 158–178 (IWRL…LRAR), 188–208 (LNYL…FLKS), and 211–231 (VVWS…LGWL).

It localises to the plastid. The protein localises to the chloroplast. Its subcellular location is the membrane. Plays a positive role in the immune response to the oomycetes P.infestans, including induced oxidative burst and enhanced expression of defense-related genes. This Solanum tuberosum (Potato) protein is Protein RESISTANCE TO PHYTOPHTHORA 1, chloroplastic.